The primary structure comprises 425 residues: Serine hydroxymethyltransferase (425 aa).

Residues leucine 120 and 124 to 126 each bind (6S)-5,6,7,8-tetrahydrofolate; that span reads GHL. The residue at position 229 (lysine 229) is an N6-(pyridoxal phosphate)lysine. (6S)-5,6,7,8-tetrahydrofolate is bound at residue 353–355; the sequence is SPF.

Belongs to the SHMT family. In terms of assembly, homodimer. Requires pyridoxal 5'-phosphate as cofactor.

The protein localises to the cytoplasm. It catalyses the reaction (6R)-5,10-methylene-5,6,7,8-tetrahydrofolate + glycine + H2O = (6S)-5,6,7,8-tetrahydrofolate + L-serine. It functions in the pathway one-carbon metabolism; tetrahydrofolate interconversion. The protein operates within amino-acid biosynthesis; glycine biosynthesis; glycine from L-serine: step 1/1. Functionally, catalyzes the reversible interconversion of serine and glycine with tetrahydrofolate (THF) serving as the one-carbon carrier. This reaction serves as the major source of one-carbon groups required for the biosynthesis of purines, thymidylate, methionine, and other important biomolecules. Also exhibits THF-independent aldolase activity toward beta-hydroxyamino acids, producing glycine and aldehydes, via a retro-aldol mechanism. The chain is Serine hydroxymethyltransferase from Thermosynechococcus vestitus (strain NIES-2133 / IAM M-273 / BP-1).